The chain runs to 83 residues: Small ribosomal subunit protein uS17 (83 aa).

Belongs to the universal ribosomal protein uS17 family. As to quaternary structure, part of the 30S ribosomal subunit.

In terms of biological role, one of the primary rRNA binding proteins, it binds specifically to the 5'-end of 16S ribosomal RNA. The sequence is that of Small ribosomal subunit protein uS17 from Synechococcus sp. (strain RCC307).